The primary structure comprises 287 residues: Nucleotide-binding protein Sfri_3380 (287 aa).

8–15 (GRSGSGKS) is an ATP binding site. A GTP-binding site is contributed by 56-59 (DVRN).

The protein belongs to the RapZ-like family.

Functionally, displays ATPase and GTPase activities. In Shewanella frigidimarina (strain NCIMB 400), this protein is Nucleotide-binding protein Sfri_3380.